The primary structure comprises 216 residues: Octanoyltransferase (216 aa).

Positions 34–209 (ENTIDEIWLV…KMNQQLDYSH (176 aa)) constitute a BPL/LPL catalytic domain. Residues 73-80 (RGGQITFH), 140-142 (SLG), and 153-155 (GLA) contribute to the substrate site. Catalysis depends on C171, which acts as the Acyl-thioester intermediate.

It belongs to the LipB family.

The protein resides in the cytoplasm. The enzyme catalyses octanoyl-[ACP] + L-lysyl-[protein] = N(6)-octanoyl-L-lysyl-[protein] + holo-[ACP] + H(+). Its pathway is protein modification; protein lipoylation via endogenous pathway; protein N(6)-(lipoyl)lysine from octanoyl-[acyl-carrier-protein]: step 1/2. Catalyzes the transfer of endogenously produced octanoic acid from octanoyl-acyl-carrier-protein onto the lipoyl domains of lipoate-dependent enzymes. Lipoyl-ACP can also act as a substrate although octanoyl-ACP is likely to be the physiological substrate. This chain is Octanoyltransferase, found in Psychromonas ingrahamii (strain DSM 17664 / CCUG 51855 / 37).